The following is a 203-amino-acid chain: Ribosome maturation factor RimP (203 aa).

The tract at residues 179–203 (VSSEGEDGGEARQAPKLNPKKPGKK) is disordered.

It belongs to the RimP family.

It is found in the cytoplasm. Functionally, required for maturation of 30S ribosomal subunits. The sequence is that of Ribosome maturation factor RimP from Gluconobacter oxydans (strain 621H) (Gluconobacter suboxydans).